Here is a 446-residue protein sequence, read N- to C-terminus: Neuraminidase (446 aa).

The segment at 13–65 (HFNQYECDSLADNQVMPCEPIIIERNITEIIYLTNTTIEKEICPKLMEYRNWS) is hypervariable stalk region. Asparagine 38, asparagine 47, and asparagine 63 each carry an N-linked (GlcNAc...) asparagine; by host glycan. The head of neuraminidase stretch occupies residues 68–446 (QCKITGFAPF…DGANINFMPI (379 aa)). 8 cysteine pairs are disulfide-bonded: cysteine 69/cysteine 394, cysteine 101/cysteine 106, cysteine 160/cysteine 207, cysteine 209/cysteine 214, cysteine 255/cysteine 268, cysteine 257/cysteine 266, cysteine 295/cysteine 314, and cysteine 398/cysteine 424. Substrate is bound at residue arginine 95. N-linked (GlcNAc...) asparagine; by host glycosylation occurs at asparagine 123. Aspartate 128 serves as the catalytic Proton donor/acceptor. Arginine 129 contributes to the substrate binding site. N-linked (GlcNAc...) asparagine; by host glycosylation is found at asparagine 177 and asparagine 211. 253–254 (EE) contributes to the substrate binding site. Arginine 269 contributes to the substrate binding site. Residues aspartate 270, glycine 274, and aspartate 301 each contribute to the Ca(2+) site. A disordered region spans residues 304 to 327 (RNNDRSSSSDCKNPNNDKGNHGVK). The span at 308 to 320 (RSSSSDCKNPNND) shows a compositional bias: polar residues. Arginine 348 is a substrate binding site. Residue asparagine 379 is glycosylated (N-linked (GlcNAc...) asparagine; by host). Residue tyrosine 383 is the Nucleophile of the active site.

It belongs to the glycosyl hydrolase 34 family. Homotetramer. It depends on Ca(2+) as a cofactor. N-glycosylated.

Its subcellular location is the virion membrane. The protein localises to the host apical cell membrane. It carries out the reaction Hydrolysis of alpha-(2-&gt;3)-, alpha-(2-&gt;6)-, alpha-(2-&gt;8)- glycosidic linkages of terminal sialic acid residues in oligosaccharides, glycoproteins, glycolipids, colominic acid and synthetic substrates.. With respect to regulation, inhibited by the neuraminidase inhibitors zanamivir (Relenza) and oseltamivir (Tamiflu). These drugs interfere with the release of progeny virus from infected cells and are effective against all influenza strains. Resistance to neuraminidase inhibitors is quite rare. Its function is as follows. Catalyzes the removal of terminal sialic acid residues from viral and cellular glycoconjugates. Cleaves off the terminal sialic acids on the glycosylated HA during virus budding to facilitate virus release. Additionally helps virus spread through the circulation by further removing sialic acids from the cell surface. These cleavages prevent self-aggregation and ensure the efficient spread of the progeny virus from cell to cell. Otherwise, infection would be limited to one round of replication. Described as a receptor-destroying enzyme because it cleaves a terminal sialic acid from the cellular receptors. May facilitate viral invasion of the upper airways by cleaving the sialic acid moieties on the mucin of the airway epithelial cells. Likely to plays a role in the budding process through its association with lipid rafts during intracellular transport. May additionally display a raft-association independent effect on budding. Plays a role in the determination of host range restriction on replication and virulence. Sialidase activity in late endosome/lysosome traffic seems to enhance virus replication. This chain is Neuraminidase, found in Influenza A virus (strain A/Swine/Hong Kong/127/1982 H3N2).